We begin with the raw amino-acid sequence, 412 residues long: Multifunctional CCA protein (412 aa).

Positions 8 and 11 each coordinate ATP. Positions 8 and 11 each coordinate CTP. Mg(2+) contacts are provided by Glu-21 and Asp-23. Arg-91, Arg-137, and Arg-140 together coordinate ATP. Positions 91, 137, and 140 each coordinate CTP. Residues 228-329 (TGIHTLMTLA…LKLFNAIDVW (102 aa)) form the HD domain.

Belongs to the tRNA nucleotidyltransferase/poly(A) polymerase family. Bacterial CCA-adding enzyme type 1 subfamily. In terms of assembly, monomer. Can also form homodimers and oligomers. The cofactor is Mg(2+). Ni(2+) serves as cofactor.

The catalysed reaction is a tRNA precursor + 2 CTP + ATP = a tRNA with a 3' CCA end + 3 diphosphate. The enzyme catalyses a tRNA with a 3' CCA end + 2 CTP + ATP = a tRNA with a 3' CCACCA end + 3 diphosphate. Catalyzes the addition and repair of the essential 3'-terminal CCA sequence in tRNAs without using a nucleic acid template. Adds these three nucleotides in the order of C, C, and A to the tRNA nucleotide-73, using CTP and ATP as substrates and producing inorganic pyrophosphate. tRNA 3'-terminal CCA addition is required both for tRNA processing and repair. Also involved in tRNA surveillance by mediating tandem CCA addition to generate a CCACCA at the 3' terminus of unstable tRNAs. While stable tRNAs receive only 3'-terminal CCA, unstable tRNAs are marked with CCACCA and rapidly degraded. This Yersinia pseudotuberculosis serotype I (strain IP32953) protein is Multifunctional CCA protein.